The primary structure comprises 208 residues: RNA-binding protein KhpB (208 aa).

The tract at residues 5 to 55 (TAAGRNVDEAVQSGLQELGLTKDKVEITVIEEGNKGFLGIFGKKPAIVKLV) is jag_N domain. Residues 58-135 (IDPIQQAKLY…GQYKNVTVDA (78 aa)) enclose the KH domain. The R3H domain occupies 140 to 208 (LKRKETLSQL…NRHLVISHKR (69 aa)).

Belongs to the KhpB RNA-binding protein family. In terms of assembly, forms a complex with KhpA.

It localises to the cytoplasm. Functionally, a probable RNA chaperone. Forms a complex with KhpA which binds to cellular RNA and controls its expression. Plays a role in peptidoglycan (PG) homeostasis and cell length regulation. This chain is RNA-binding protein KhpB, found in Bacillus subtilis (strain 168).